The sequence spans 150 residues: Large ribosomal subunit protein bL9 (150 aa).

The protein belongs to the bacterial ribosomal protein bL9 family.

In terms of biological role, binds to the 23S rRNA. The chain is Large ribosomal subunit protein bL9 from Janthinobacterium sp. (strain Marseille) (Minibacterium massiliensis).